Consider the following 515-residue polypeptide: Serine--tRNA ligase, cytoplasmic (515 aa).

The tract at residues 9–61 (RTDKGGDPEIIRETQRKRFKDVSLVDKLVQADTEWRKCRFTADNLNKAKNLCS) is interaction with tRNA. L-serine contacts are provided by threonine 271 and arginine 302. Residues 302–304 (RQE) and 318–321 (VHQF) contribute to the ATP site. L-serine is bound at residue glutamate 325. 391–394 (ELVS) lines the ATP pocket. Asparagine 427 contacts L-serine. A disordered region spans residues 475–515 (PIDQETTKKQKKQQEGGKKKKHQGGDADLENKVENMSVNDS). The segment covering 479–507 (ETTKKQKKQQEGGKKKKHQGGDADLENKV) has biased composition (basic and acidic residues). Residues 482-494 (KKQKKQQEGGKKK) carry the Nuclear localization signal motif.

The protein belongs to the class-II aminoacyl-tRNA synthetase family. Type-1 seryl-tRNA synthetase subfamily.

It localises to the cytoplasm. Its subcellular location is the nucleus. The catalysed reaction is tRNA(Ser) + L-serine + ATP = L-seryl-tRNA(Ser) + AMP + diphosphate + H(+). It catalyses the reaction tRNA(Sec) + L-serine + ATP = L-seryl-tRNA(Sec) + AMP + diphosphate + H(+). Catalyzes the attachment of serine to tRNA(Ser) in a two-step reaction: serine is first activated by ATP to form Ser-AMP and then transferred to the acceptor end of tRNA(Ser). Is probably also able to aminoacylate tRNA(Sec) with serine, to form the misacylated tRNA L-seryl-tRNA(Sec), which will be further converted into selenocysteinyl-tRNA(Sec). In the nucleus, binds to the vegfa core promoter and prevents myc binding and transcriptional activation by myc. Thereby inhibits the production of vegfa and sprouting angiogenesis mediated by vegfa. The sequence is that of Serine--tRNA ligase, cytoplasmic (sars1) from Danio rerio (Zebrafish).